Consider the following 412-residue polypeptide: Subtilisin-like protease 6 (412 aa).

A signal peptide spans 1–20 (MGFITKAIPIVLAALSTVNG). Residues 21 to 126 (AKILEAGPHA…VVRTSTNGTN (106 aa)) constitute a propeptide that is removed on maturation. One can recognise an Inhibitor I9 domain in the interval 36–120 (KYIVVMKREV…YIEPDFVVRT (85 aa)). N123 and N126 each carry an N-linked (GlcNAc...) asparagine glycan. A Peptidase S8 domain is found at 135–412 (SWGLARVSSK…SKLIYNGSGK (278 aa)). Active-site charge relay system residues include D167 and H198. N252 and N264 each carry an N-linked (GlcNAc...) asparagine glycan. The active-site Charge relay system is S358. N408 is a glycosylation site (N-linked (GlcNAc...) asparagine).

It belongs to the peptidase S8 family.

It is found in the secreted. Functionally, secreted subtilisin-like serine protease with keratinolytic activity that contributes to pathogenicity. The polypeptide is Subtilisin-like protease 6 (SUB6) (Trichophyton equinum (Horse ringworm fungus)).